We begin with the raw amino-acid sequence, 247 residues long: Carboxy-S-adenosyl-L-methionine synthase (247 aa).

Residues tyrosine 40, 65–67, 90–91, 122–123, asparagine 137, and arginine 204 each bind S-adenosyl-L-methionine; these read GAS, DN, and DI.

Belongs to the class I-like SAM-binding methyltransferase superfamily. Cx-SAM synthase family. In terms of assembly, homodimer.

It catalyses the reaction prephenate + S-adenosyl-L-methionine = carboxy-S-adenosyl-L-methionine + 3-phenylpyruvate + H2O. Its function is as follows. Catalyzes the conversion of S-adenosyl-L-methionine (SAM) to carboxy-S-adenosyl-L-methionine (Cx-SAM). This Pseudomonas entomophila (strain L48) protein is Carboxy-S-adenosyl-L-methionine synthase.